We begin with the raw amino-acid sequence, 109 residues long: uncharacterized protein (109 aa).

Transmembrane regions (helical) follow at residues 24–44 and 68–88; these read SLGI…SAFV and VIVL…SIFI.

Its subcellular location is the membrane. This is an uncharacterized protein from Saccharomyces cerevisiae (strain ATCC 204508 / S288c) (Baker's yeast).